Here is a 210-residue protein sequence, read N- to C-terminus: Redox-sensing transcriptional repressor Rex (210 aa).

The segment at residues 17-56 (KYHRYLYELLKNDVDRISSKELSEKIGFTASQIRQDLNCF) is a DNA-binding region (H-T-H motif). 91-96 (GAGNIG) lines the NAD(+) pocket.

Belongs to the transcriptional regulatory Rex family. As to quaternary structure, homodimer.

The protein resides in the cytoplasm. Its function is as follows. Modulates transcription in response to changes in cellular NADH/NAD(+) redox state. This chain is Redox-sensing transcriptional repressor Rex, found in Clostridium botulinum (strain Loch Maree / Type A3).